Consider the following 620-residue polypeptide: Glutathione-regulated potassium-efflux system protein KefC (620 aa).

A run of 12 helical transmembrane segments spans residues 4-24 (HTLI…PIAV), 26-46 (LGLG…PWGL), 54-74 (SILH…GLEL), 90-110 (GALQ…LLGL), 114-134 (VAEL…MQAM), 149-169 (FAVL…IPLL), 178-198 (MGAF…VVLL), 218-238 (VFSA…EEVG), 270-290 (GLLL…GTLL), 294-314 (LRIV…LWLI), 327-347 (WFAV…GAAQ), and 359-379 (SLTL…VILN). The region spanning 399–518 (QPRVIIAGFG…AGVEKPERET (120 aa)) is the RCK N-terminal domain. The interval 597–620 (GWQGTEEGKHTGNMADEPETKPSS) is disordered.

It belongs to the monovalent cation:proton antiporter 2 (CPA2) transporter (TC 2.A.37) family. KefC subfamily. In terms of assembly, homodimer. Interacts with the regulatory subunit KefF.

It is found in the cell inner membrane. Its function is as follows. Pore-forming subunit of a potassium efflux system that confers protection against electrophiles. Catalyzes K(+)/H(+) antiport. The protein is Glutathione-regulated potassium-efflux system protein KefC of Escherichia coli O6:K15:H31 (strain 536 / UPEC).